Consider the following 171-residue polypeptide: MPLTWKDSGLRWYWVAVLVFFADQLSKQWVLANFDLHESLNLLPFFNFTYVRNYGAAFSFLSDAGGWQRWLFTIVAVGFSTLLTVWLRRQSASLLKLNLAYTLVIGGALGNLVDRLMHGFVVDFIDFFWAKSHYPAFNIADSAICIGAVLIIWDAFLSGKSETDSAEGVKK.

The next 3 helical transmembrane spans lie at 12–32 (WYWV…WVLA), 67–87 (WQRW…TVWL), and 93–113 (SLLK…GNLV). Residues Asp-123 and Asp-141 contribute to the active site. The helical transmembrane segment at 137–157 (FNIADSAICIGAVLIIWDAFL) threads the bilayer.

The protein belongs to the peptidase A8 family.

Its subcellular location is the cell inner membrane. The catalysed reaction is Release of signal peptides from bacterial membrane prolipoproteins. Hydrolyzes -Xaa-Yaa-Zaa-|-(S,diacylglyceryl)Cys-, in which Xaa is hydrophobic (preferably Leu), and Yaa (Ala or Ser) and Zaa (Gly or Ala) have small, neutral side chains.. Its pathway is protein modification; lipoprotein biosynthesis (signal peptide cleavage). Its function is as follows. This protein specifically catalyzes the removal of signal peptides from prolipoproteins. This chain is Lipoprotein signal peptidase, found in Shewanella baltica (strain OS223).